A 542-amino-acid polypeptide reads, in one-letter code: CTP synthase (542 aa).

Positions 1 to 265 are amidoligase domain; sequence MTRYIFVTGG…DDFVVERFGL (265 aa). S13 is a CTP binding site. S13 provides a ligand contact to UTP. ATP contacts are provided by residues 14-19 and D71; that span reads SLGKGI. The Mg(2+) site is built by D71 and E139. Residues 146–148, 186–191, and K222 each bind CTP; these read DIE and KTKPTQ. UTP-binding positions include 186–191 and K222; that span reads KTKPTQ. In terms of domain architecture, Glutamine amidotransferase type-1 spans 290-541; sequence TIAMVGKYME…VKAALAQKNK (252 aa). G351 is an L-glutamine binding site. Residue C378 is the Nucleophile; for glutamine hydrolysis of the active site. L-glutamine-binding positions include 379 to 382, E402, and R469; that span reads LGMQ. Active-site residues include H514 and E516.

Belongs to the CTP synthase family. As to quaternary structure, homotetramer.

The catalysed reaction is UTP + L-glutamine + ATP + H2O = CTP + L-glutamate + ADP + phosphate + 2 H(+). It carries out the reaction L-glutamine + H2O = L-glutamate + NH4(+). It catalyses the reaction UTP + NH4(+) + ATP = CTP + ADP + phosphate + 2 H(+). It functions in the pathway pyrimidine metabolism; CTP biosynthesis via de novo pathway; CTP from UDP: step 2/2. Allosterically activated by GTP, when glutamine is the substrate; GTP has no effect on the reaction when ammonia is the substrate. The allosteric effector GTP functions by stabilizing the protein conformation that binds the tetrahedral intermediate(s) formed during glutamine hydrolysis. Inhibited by the product CTP, via allosteric rather than competitive inhibition. Functionally, catalyzes the ATP-dependent amination of UTP to CTP with either L-glutamine or ammonia as the source of nitrogen. Regulates intracellular CTP levels through interactions with the four ribonucleotide triphosphates. The polypeptide is CTP synthase (Pseudomonas putida (strain GB-1)).